The sequence spans 422 residues: tRNA hydroxylation protein P (422 aa).

Positions 1–58 (MNQVELLSPAGNLKKLKIALNYGADAVYGGVSHFSLRNRAGKEFTLETFKEGIDYAHA) are cleaved as a signal peptide.

It belongs to the peptidase U32 family.

In terms of biological role, involved in prephenate-dependent formation of 5-hydroxyuridine (ho5U) modification at position 34 in tRNAs, the first step in 5-carboxymethoxyuridine (cmo5U) biosynthesis. The protein is tRNA hydroxylation protein P of Helicobacter pylori (strain J99 / ATCC 700824) (Campylobacter pylori J99).